Reading from the N-terminus, the 139-residue chain is Nucleoside diphosphate kinase (139 aa).

ATP contacts are provided by Lys10, Phe58, Arg86, Thr92, Arg104, and Asn114. Catalysis depends on His117, which acts as the Pros-phosphohistidine intermediate.

Belongs to the NDK family. In terms of assembly, homotetramer. Mg(2+) is required as a cofactor.

The protein resides in the cytoplasm. The catalysed reaction is a 2'-deoxyribonucleoside 5'-diphosphate + ATP = a 2'-deoxyribonucleoside 5'-triphosphate + ADP. It carries out the reaction a ribonucleoside 5'-diphosphate + ATP = a ribonucleoside 5'-triphosphate + ADP. Its function is as follows. Major role in the synthesis of nucleoside triphosphates other than ATP. The ATP gamma phosphate is transferred to the NDP beta phosphate via a ping-pong mechanism, using a phosphorylated active-site intermediate. This is Nucleoside diphosphate kinase from Rhodococcus opacus (strain B4).